We begin with the raw amino-acid sequence, 446 residues long: UDP-N-acetylmuramate--L-alanine ligase (446 aa).

122–128 (GTHGKTT) provides a ligand contact to ATP.

It belongs to the MurCDEF family.

Its subcellular location is the cytoplasm. The catalysed reaction is UDP-N-acetyl-alpha-D-muramate + L-alanine + ATP = UDP-N-acetyl-alpha-D-muramoyl-L-alanine + ADP + phosphate + H(+). Its pathway is cell wall biogenesis; peptidoglycan biosynthesis. Functionally, cell wall formation. The polypeptide is UDP-N-acetylmuramate--L-alanine ligase (Nocardioides sp. (strain ATCC BAA-499 / JS614)).